The primary structure comprises 663 residues: Epithelial sodium channel subunit gamma-2 (663 aa).

At 1-55 (MSNSGKKLTQKLKKNLPVTGPQAPTLYELMQWYCLNTNTHGCRRIVVSKGRLRRW) the chain is on the cytoplasmic side. Residues 56-76 (IWIVLTLIAVALIFWQCALLL) traverse the membrane as a helical segment. The Extracellular portion of the chain corresponds to 77-544 (MTYYSVSASI…GGQLGLWMSC (468 aa)). Intrachain disulfides connect Cys-101–Cys-286, Cys-209–Cys-217, Cys-263–Cys-270, Cys-375–Cys-460, Cys-397–Cys-456, Cys-401–Cys-452, Cys-410–Cys-437, and Cys-412–Cys-426. Residues 545–565 (SMVCGLEIVEVFFIDSFWVIL) form a helical membrane-spanning segment. The Cytoplasmic portion of the chain corresponds to 566–663 (RQKWHKLCNW…IDSDEDVERF (98 aa)).

It belongs to the amiloride-sensitive sodium channel (TC 1.A.6) family. SCNN1G subfamily. As to quaternary structure, component of the heterotrimeric epithelial sodium channel (ENaC) composed of an alpha/SCNN1A, a beta/SCNN1B and a gamma/SCNN1G subunit.

The protein resides in the apical cell membrane. The catalysed reaction is Na(+)(in) = Na(+)(out). With respect to regulation, originally identified and characterized by its inhibition by the diuretic drug amiloride. This is one of the three pore-forming subunits of the heterotrimeric epithelial sodium channel (ENaC), a critical regulator of sodium balance and fluid homeostasis. ENaC operates in epithelial tissues, where it mediates the electrodiffusion of sodium ions from extracellular fluid through the apical membrane of cells, with water following osmotically. In Xenopus laevis (African clawed frog), this protein is Epithelial sodium channel subunit gamma-2 (scnn1g-b).